Reading from the N-terminus, the 309-residue chain is Calcium homeostasis modulator protein 5 (309 aa).

The Cytoplasmic portion of the chain corresponds to 1-15 (MDAFQSILKFFLNQK). Residues 16–37 (TAIGYSFMALLTVGSERLFSLV) form a helical membrane-spanning segment. Residues Arg-32 and Val-37 each coordinate a 1,2-diacyl-sn-glycero-3-phosphate. Residues 38-45 (AFKCPCSI) lie on the Extracellular side of the membrane. Intrachain disulfides connect Cys-41/Cys-127, Cys-43/Cys-158, and Cys-142/Cys-149. The chain crosses the membrane as a helical span at residues 46 to 70 (ENTAYGLVFLFAPAWVLLILGFFLN). Residues 71-99 (NKAWRLFTGCCMNPQKIFPRRRCCRFFYV) lie on the Cytoplasmic side of the membrane. The chain crosses the membrane as a helical span at residues 100–129 (LGHITLSSLVAPVMWLSVALLNGTFYECAM). A 1,2-diacyl-sn-glycero-3-phosphate is bound at residue Asn-121. The Extracellular segment spans residues 130–174 (SGTRSTRLLEMICKGKPKECWEELHKVSCGKSSMAAMDSEEVRLS). A helical membrane pass occupies residues 175 to 200 (LQAQSQILGWCLICSASFFSLLTTCY). Residues 201-309 (ARCRSKVSYL…MILVGTAQSL (109 aa)) lie on the Cytoplasmic side of the membrane. Arg-202 is a binding site for a 1,2-diacyl-sn-glycero-3-phosphate.

Belongs to the CALHM family. As to quaternary structure, oligomerizes to form undecameric cone-shaped channels.

It localises to the membrane. Its function is as follows. May assemble to form large pore channels with gating and ion conductance likely regulated by membrane lipids. The chain is Calcium homeostasis modulator protein 5 from Rattus norvegicus (Rat).